The primary structure comprises 352 residues: 3-isopropylmalate dehydrogenase (352 aa).

Substrate contacts are provided by R91, R101, R129, and D218. Positions 218, 242, and 246 each coordinate Mg(2+). Residue 281 to 293 (GSAPDIAGKGLAN) participates in NAD(+) binding.

It belongs to the isocitrate and isopropylmalate dehydrogenases family. LeuB type 1 subfamily. Homodimer. It depends on Mg(2+) as a cofactor. The cofactor is Mn(2+).

The protein localises to the cytoplasm. The enzyme catalyses (2R,3S)-3-isopropylmalate + NAD(+) = 4-methyl-2-oxopentanoate + CO2 + NADH. The protein operates within amino-acid biosynthesis; L-leucine biosynthesis; L-leucine from 3-methyl-2-oxobutanoate: step 3/4. Its function is as follows. Catalyzes the oxidation of 3-carboxy-2-hydroxy-4-methylpentanoate (3-isopropylmalate) to 3-carboxy-4-methyl-2-oxopentanoate. The product decarboxylates to 4-methyl-2 oxopentanoate. The chain is 3-isopropylmalate dehydrogenase from Novosphingobium aromaticivorans (strain ATCC 700278 / DSM 12444 / CCUG 56034 / CIP 105152 / NBRC 16084 / F199).